The sequence spans 317 residues: Putative 2-hydroxyacid dehydrogenase SERP1888 (317 aa).

NAD(+)-binding positions include 155–156, 234–236, and D260; these read EI and AGR. R236 is an active-site residue. The active site involves E265. The active-site Proton donor is the H283. 283–286 contacts NAD(+); that stretch reads HIGN.

It belongs to the D-isomer specific 2-hydroxyacid dehydrogenase family.

This chain is Putative 2-hydroxyacid dehydrogenase SERP1888, found in Staphylococcus epidermidis (strain ATCC 35984 / DSM 28319 / BCRC 17069 / CCUG 31568 / BM 3577 / RP62A).